The sequence spans 195 residues: HTH-type transcriptional regulator BetI (195 aa).

Positions 8–68 (EIRRAQLIDA…ATMRHVLRDL (61 aa)) constitute an HTH tetR-type domain. Positions 31–50 (TLASVAQRANISTGIVSHYF) form a DNA-binding region, H-T-H motif.

Its pathway is amine and polyamine biosynthesis; betaine biosynthesis via choline pathway [regulation]. In terms of biological role, repressor involved in the biosynthesis of the osmoprotectant glycine betaine. It represses transcription of the choline transporter BetT and the genes of BetAB involved in the synthesis of glycine betaine. This chain is HTH-type transcriptional regulator BetI, found in Burkholderia thailandensis (strain ATCC 700388 / DSM 13276 / CCUG 48851 / CIP 106301 / E264).